The chain runs to 396 residues: Odorant receptor 49a (396 aa).

Topologically, residues 1 to 6 (MEKLRS) are cytoplasmic. Residues 7 to 27 (YEDFIFMANMMFKTLGYDLFH) traverse the membrane as a helical segment. Over 28–34 (TPKPWWR) the chain is Extracellular. Residues 35–55 (YLLVRGYFVLCTISNFYEASM) form a helical membrane-spanning segment. Residues 56-70 (VTTRIIEWESLAGSP) are Cytoplasmic-facing. The helical transmembrane segment at 71–91 (SKIMRQGLHFFYMLSSQLKFI) threads the bilayer. The Extracellular segment spans residues 92–141 (TFMINRKRLLQLSHRLKELYPHKEQNQRKYEVNKYYLSCSTRNVLYVYYF). Residues 142 to 162 (VMVVMALEPLVQSCIMYLIGF) form a helical membrane-spanning segment. Topologically, residues 163–209 (GKADFTYKRIFPTRLTFDSEKPLGYVLAYVIDFTYSQFIVNVSLGTD) are cytoplasmic. The chain crosses the membrane as a helical span at residues 210-230 (LWMMCVSSQISMHLGYLANML). The Extracellular segment spans residues 231-266 (ASIRPSPETEQQDCDFLASIIKRHQLMIRLQKDVNY). Residues 267–287 (VFGLLLASNLFTTSCLLCCMA) form a helical membrane-spanning segment. The Cytoplasmic portion of the chain corresponds to 288–296 (YYTVVEGFN). Residues 297–317 (WEGISYMMLFASVAAQFYVVS) traverse the membrane as a helical segment. Over 318–396 (SHGQMLIDLS…FAVIRQTVEK (79 aa)) the chain is Extracellular.

This sequence belongs to the insect chemoreceptor superfamily. Heteromeric odorant receptor channel (TC 1.A.69) family. Or49a subfamily. Interacts with Orco. Complexes exist early in the endomembrane system in olfactory sensory neurons (OSNs), coupling these complexes to the conserved ciliary trafficking pathway.

It localises to the cell membrane. Functionally, odorant receptor which mediates acceptance or avoidance behavior, depending on its substrates. The odorant receptor repertoire encodes a large collection of odor stimuli that vary widely in identity, intensity, and duration. May form a complex with Orco to form odorant-sensing units, providing sensitive and prolonged odorant signaling and calcium permeability. Involved in the behavioral responses to butanol and 2-heptanone. The chain is Odorant receptor 49a (Or49a) from Drosophila melanogaster (Fruit fly).